Here is a 97-residue protein sequence, read N- to C-terminus: Mapk-regulated corepressor-interacting protein 1 (97 aa).

The disordered stretch occupies residues 1-30; sequence MTSSPVSRVVYNGKRNSSHRSPPNSSEIFT. Serine 21 carries the post-translational modification Phosphoserine. Position 30 is a phosphothreonine (threonine 30). Tyrosine 41 carries the post-translational modification Phosphotyrosine. Residues 77–97 form a disordered region; sequence TFRPIDLSDLKRRNTQDAKKS. The short motif at 80–84 is the PXDLS motif element; that stretch reads PIDLS. Residues 82–97 are compositionally biased toward basic and acidic residues; the sequence is DLSDLKRRNTQDAKKS.

It belongs to the MCRIP family. As to quaternary structure, interacts (unphosphorylated form, via the PXDLS motif) with CTBP1, competitively inhibiting CTBP-ZEB1 interaction. Interacts with CTBP2. Interacts with MCRIP2. Interacts with DDX6. Post-translationally, phosphorylation by MAPK3/1 (ERK1/2) regulates MCRIP1 binding to CTBP(s).

Its subcellular location is the nucleus. The protein resides in the cytoplasm. It localises to the stress granule. In terms of biological role, the phosphorylation status of MCRIP1 functions as a molecular switch to regulate epithelial-mesenchymal transition. Unphosphorylated MCRIP1 binds to and inhibits the transcriptional corepressor CTBP(s). When phosphorylated by MAPK/ERK, MCRIP1 releases CTBP(s) resulting in transcriptional silencing of the E-cadherin gene and induction of epithelial-mesenchymal transition. This Bos taurus (Bovine) protein is Mapk-regulated corepressor-interacting protein 1 (MCRIP1).